A 235-amino-acid polypeptide reads, in one-letter code: Aspartate/glutamate leucyltransferase (235 aa).

This sequence belongs to the R-transferase family. Bpt subfamily.

The protein localises to the cytoplasm. The catalysed reaction is N-terminal L-glutamyl-[protein] + L-leucyl-tRNA(Leu) = N-terminal L-leucyl-L-glutamyl-[protein] + tRNA(Leu) + H(+). It carries out the reaction N-terminal L-aspartyl-[protein] + L-leucyl-tRNA(Leu) = N-terminal L-leucyl-L-aspartyl-[protein] + tRNA(Leu) + H(+). In terms of biological role, functions in the N-end rule pathway of protein degradation where it conjugates Leu from its aminoacyl-tRNA to the N-termini of proteins containing an N-terminal aspartate or glutamate. This Pseudomonas savastanoi pv. phaseolicola (strain 1448A / Race 6) (Pseudomonas syringae pv. phaseolicola (strain 1448A / Race 6)) protein is Aspartate/glutamate leucyltransferase.